The chain runs to 346 residues: D-erythrose-4-phosphate dehydrogenase (346 aa).

Residue 11–12 (RI) coordinates NAD(+). Substrate-binding positions include 163–165 (SCT), arginine 209, 222–223 (TK), and arginine 245. Cysteine 164 functions as the Nucleophile in the catalytic mechanism. Asparagine 327 serves as a coordination point for NAD(+).

Belongs to the glyceraldehyde-3-phosphate dehydrogenase family. Epd subfamily. In terms of assembly, homotetramer.

The protein resides in the cytoplasm. The enzyme catalyses D-erythrose 4-phosphate + NAD(+) + H2O = 4-phospho-D-erythronate + NADH + 2 H(+). Its pathway is cofactor biosynthesis; pyridoxine 5'-phosphate biosynthesis; pyridoxine 5'-phosphate from D-erythrose 4-phosphate: step 1/5. Functionally, catalyzes the NAD-dependent conversion of D-erythrose 4-phosphate to 4-phosphoerythronate. This chain is D-erythrose-4-phosphate dehydrogenase, found in Vibrio vulnificus (strain CMCP6).